The following is a 170-amino-acid chain: Putative 5'(3')-deoxyribonucleotidase (170 aa).

The active-site Nucleophile is the Asp28. Mg(2+)-binding residues include Asp28, Asp30, and Asp134. Asp30 (proton donor) is an active-site residue.

It belongs to the 5'(3')-deoxyribonucleotidase family. It depends on Mg(2+) as a cofactor.

Its function is as follows. Dephosphorylates the 5' and 2'(3')-phosphates of deoxyribonucleotides. This is Putative 5'(3')-deoxyribonucleotidase from Vibrio parahaemolyticus (KVP40).